The chain runs to 362 residues: DNA replication and repair protein RecF (362 aa).

Position 31–38 (31–38) interacts with ATP; it reads GDNAAGKT.

The protein belongs to the RecF family.

It is found in the cytoplasm. Functionally, the RecF protein is involved in DNA metabolism; it is required for DNA replication and normal SOS inducibility. RecF binds preferentially to single-stranded, linear DNA. It also seems to bind ATP. The polypeptide is DNA replication and repair protein RecF (Hydrogenovibrio crunogenus (strain DSM 25203 / XCL-2) (Thiomicrospira crunogena)).